Here is a 232-residue protein sequence, read N- to C-terminus: 7-cyano-7-deazaguanine synthase (232 aa).

Residue 8–18 participates in ATP binding; sequence FSGGQDSTTCL. 4 residues coordinate Zn(2+): Cys187, Cys196, Cys199, and Cys202.

Belongs to the QueC family. The cofactor is Zn(2+).

The enzyme catalyses 7-carboxy-7-deazaguanine + NH4(+) + ATP = 7-cyano-7-deazaguanine + ADP + phosphate + H2O + H(+). It functions in the pathway purine metabolism; 7-cyano-7-deazaguanine biosynthesis. Catalyzes the ATP-dependent conversion of 7-carboxy-7-deazaguanine (CDG) to 7-cyano-7-deazaguanine (preQ(0)). The chain is 7-cyano-7-deazaguanine synthase from Photobacterium profundum (strain SS9).